The primary structure comprises 209 residues: Kynurenine formamidase (209 aa).

Phe-18 provides a ligand contact to substrate. Positions 48, 52, and 54 each coordinate Zn(2+). Residue His-58 is the Proton donor/acceptor of the active site. Residues His-160 and Glu-172 each coordinate Zn(2+).

Belongs to the Cyclase 1 superfamily. KynB family. Homodimer. It depends on Zn(2+) as a cofactor.

The enzyme catalyses N-formyl-L-kynurenine + H2O = L-kynurenine + formate + H(+). It functions in the pathway amino-acid degradation; L-tryptophan degradation via kynurenine pathway; L-kynurenine from L-tryptophan: step 2/2. In terms of biological role, catalyzes the hydrolysis of N-formyl-L-kynurenine to L-kynurenine, the second step in the kynurenine pathway of tryptophan degradation. This chain is Kynurenine formamidase, found in Bordetella avium (strain 197N).